The following is a 312-amino-acid chain: DNA-directed RNA polymerase subunit alpha (312 aa).

The segment at Met1 to Lys227 is alpha N-terminal domain (alpha-NTD). Residues Pro243–Asn312 are alpha C-terminal domain (alpha-CTD).

The protein belongs to the RNA polymerase alpha chain family. In terms of assembly, in plastids the minimal PEP RNA polymerase catalytic core is composed of four subunits: alpha, beta, beta', and beta''. When a (nuclear-encoded) sigma factor is associated with the core the holoenzyme is formed, which can initiate transcription.

The protein localises to the plastid. It localises to the chloroplast. It catalyses the reaction RNA(n) + a ribonucleoside 5'-triphosphate = RNA(n+1) + diphosphate. Its function is as follows. DNA-dependent RNA polymerase catalyzes the transcription of DNA into RNA using the four ribonucleoside triphosphates as substrates. This chain is DNA-directed RNA polymerase subunit alpha, found in Trieres chinensis (Marine centric diatom).